Consider the following 228-residue polypeptide: Probable septum site-determining protein MinC (228 aa).

This sequence belongs to the MinC family. Interacts with MinD and FtsZ.

Functionally, cell division inhibitor that blocks the formation of polar Z ring septums. Rapidly oscillates between the poles of the cell to destabilize FtsZ filaments that have formed before they mature into polar Z rings. Prevents FtsZ polymerization. The polypeptide is Probable septum site-determining protein MinC (Pectobacterium atrosepticum (strain SCRI 1043 / ATCC BAA-672) (Erwinia carotovora subsp. atroseptica)).